The following is a 242-amino-acid chain: Ribonuclease 3 2 (242 aa).

The RNase III domain maps to Leu-12–Ser-137. Glu-51 contributes to the Mg(2+) binding site. Asp-55 is a catalytic residue. Mg(2+)-binding residues include Asp-123 and Glu-126. Glu-126 is a catalytic residue. In terms of domain architecture, DRBM spans Asn-165–Pro-235.

Belongs to the ribonuclease III family. Homodimer. The cofactor is Mg(2+).

It is found in the cytoplasm. The catalysed reaction is Endonucleolytic cleavage to 5'-phosphomonoester.. Functionally, digests double-stranded RNA. Involved in the processing of primary rRNA transcript to yield the immediate precursors to the large and small rRNAs (23S and 16S). Processes some mRNAs, and tRNAs when they are encoded in the rRNA operon. Processes pre-crRNA and tracrRNA of type II CRISPR loci if present in the organism. The sequence is that of Ribonuclease 3 2 (rnc2) from Nostoc sp. (strain PCC 7120 / SAG 25.82 / UTEX 2576).